The chain runs to 603 residues: D-3-phosphoglycerate dehydrogenase 1, chloroplastic (603 aa).

The N-terminal 54 residues, 1 to 54 (MSATAAASSSIAVATNSLRNVTLSSRSPLPSAISVAFPSRGRNTLQRRLVLVSC), are a transit peptide targeting the chloroplast. Residues 210–211 (KV), Asp-230, 289–291 (VAR), and Asp-315 contribute to the NAD(+) site. Residue Arg-291 is part of the active site. The active site involves Glu-320. Catalysis depends on His-339, which acts as the Proton donor. Residue 339 to 342 (HLGA) coordinates NAD(+). Residues 531-603 (IILCRQVDQP…AVEEFVFLKL (73 aa)) form the ACT domain.

It belongs to the D-isomer specific 2-hydroxyacid dehydrogenase family. In terms of tissue distribution, ubiquitous, but highly expressed in roots. Expressed in vasculature, root and shoot meristems, distal part of cotyledons and leaves, anther, stigma and pollen grains. Detected at the tip of the cotyledons in late embryos.

It localises to the plastid. The protein resides in the chloroplast. The catalysed reaction is (2R)-3-phosphoglycerate + NAD(+) = 3-phosphooxypyruvate + NADH + H(+). The protein operates within amino-acid biosynthesis; L-serine biosynthesis; L-serine from 3-phospho-D-glycerate: step 1/3. Partially inhibited by 5 mM serine. Its function is as follows. Involved in the plastidial phosphorylated pathway of serine biosynthesis (PPSB). Required for mature pollen development. The sequence is that of D-3-phosphoglycerate dehydrogenase 1, chloroplastic (PGDH1) from Arabidopsis thaliana (Mouse-ear cress).